The primary structure comprises 134 residues: Small ribosomal subunit protein uS9c (134 aa).

Basic and acidic residues predominate over residues 105-114 (DHHLTRDARA). The disordered stretch occupies residues 105–134 (DHHLTRDARAKERKKYGLHKARKAPQYSKR). Positions 115–134 (KERKKYGLHKARKAPQYSKR) are enriched in basic residues.

This sequence belongs to the universal ribosomal protein uS9 family.

It localises to the plastid. The protein resides in the cyanelle. The polypeptide is Small ribosomal subunit protein uS9c (rps9) (Cyanophora paradoxa).